Consider the following 807-residue polypeptide: Anaphase-promoting complex subunit 4 (807 aa).

Position 469 is a phosphotyrosine (Y469). Positions 755–788 (DESSDDEEEAGGKPVKIKEEVLSESETEAHQDAA) are disordered. A phosphoserine mark is found at S757 and S758. The span at 770–785 (KIKEEVLSESETEAHQ) shows a compositional bias: basic and acidic residues. K772 participates in a covalent cross-link: Glycyl lysine isopeptide (Lys-Gly) (interchain with G-Cter in SUMO2). 2 positions are modified to phosphoserine: S777 and S779. A Glycyl lysine isopeptide (Lys-Gly) (interchain with G-Cter in SUMO2) cross-link involves residue K797.

The protein belongs to the APC4 family. As to quaternary structure, the mammalian APC/C is composed at least of 14 distinct subunits ANAPC1, ANAPC2, CDC27/APC3, ANAPC4, ANAPC5, CDC16/APC6, ANAPC7, CDC23/APC8, ANAPC10, ANAPC11, CDC26/APC12, ANAPC13, ANAPC15 and ANAPC16 that assemble into a complex of at least 19 chains with a combined molecular mass of around 1.2 MDa; APC/C interacts with FZR1 and FBXO5. In the context of the APC/C complex, directly interacts with UBE2S. Interacts with FBXO43.

The protein localises to the nucleus. The protein operates within protein modification; protein ubiquitination. Component of the anaphase promoting complex/cyclosome (APC/C), a cell cycle-regulated E3 ubiquitin ligase that controls progression through mitosis and the G1 phase of the cell cycle. The APC/C complex acts by mediating ubiquitination and subsequent degradation of target proteins: it mainly mediates the formation of 'Lys-11'-linked polyubiquitin chains and, to a lower extent, the formation of 'Lys-48'- and 'Lys-63'-linked polyubiquitin chains. The APC/C complex catalyzes assembly of branched 'Lys-11'-/'Lys-48'-linked branched ubiquitin chains on target proteins. The sequence is that of Anaphase-promoting complex subunit 4 (Anapc4) from Mus musculus (Mouse).